Here is a 128-residue protein sequence, read N- to C-terminus: DNA-directed RNA polymerase subunit omega (128 aa).

Positions 87-106 (ARSSQAAPKSAPGQEIGKSF) are disordered.

The protein belongs to the RNA polymerase subunit omega family. In terms of assembly, the RNAP catalytic core consists of 2 alpha, 1 beta, 1 beta' and 1 omega subunit. When a sigma factor is associated with the core the holoenzyme is formed, which can initiate transcription.

It carries out the reaction RNA(n) + a ribonucleoside 5'-triphosphate = RNA(n+1) + diphosphate. Its function is as follows. Promotes RNA polymerase assembly. Latches the N- and C-terminal regions of the beta' subunit thereby facilitating its interaction with the beta and alpha subunits. The polypeptide is DNA-directed RNA polymerase subunit omega (Anaplasma marginale (strain Florida)).